We begin with the raw amino-acid sequence, 343 residues long: MLSAASQVLLRSEELLEQGKWLLVNPTDGHVFSALSNPEVYGFHQFFDIYEQSIASAKAQGRDTQHQFVAAYDTDASFDGAVLYLPKAKAHGQMLLANIVACLKPGGTLLVVGENKGGIKSAAKLLTPYSDNVNKIDSARHCAMFAAVVDKPVASFDITKWQDVSEHQVADISFKVCSLPGVFSHGELDTGTQLLLDNIDRVVSGRILDFACGAGIIGCFAGLKNPQAQVVMSDVSALAIYCSQKSAELNGVKAQVIPSNGLGALTGKFAQVFTNPPFHTGIKTDYSVTEGFMQQLKNHLQDRGSLILVANKFLRYADELDKQFKSVQTLTETTKFSVYCCRR.

The protein belongs to the methyltransferase superfamily. RsmC family. As to quaternary structure, monomer.

It is found in the cytoplasm. The enzyme catalyses guanosine(1207) in 16S rRNA + S-adenosyl-L-methionine = N(2)-methylguanosine(1207) in 16S rRNA + S-adenosyl-L-homocysteine + H(+). In terms of biological role, specifically methylates the guanine in position 1207 of 16S rRNA in the 30S particle. In Pseudoalteromonas atlantica (strain T6c / ATCC BAA-1087), this protein is Ribosomal RNA small subunit methyltransferase C.